The sequence spans 508 residues: Photosystem II CP47 reaction center protein (508 aa).

The next 6 helical transmembrane spans lie at 21–36 (AVHIMHTALVSGWAGS), 101–115 (IVFSGLCFLAAIWHW), 140–156 (GIHLFLAGVACFGFGAF), 203–218 (IAAGTLGILAGLFHLS), 237–252 (VLSSSIAAVFFAAFVV), and 457–472 (TFALLFFFGHIWHGAR).

Belongs to the PsbB/PsbC family. PsbB subfamily. As to quaternary structure, PSII is composed of 1 copy each of membrane proteins PsbA, PsbB, PsbC, PsbD, PsbE, PsbF, PsbH, PsbI, PsbJ, PsbK, PsbL, PsbM, PsbT, PsbX, PsbY, PsbZ, Psb30/Ycf12, at least 3 peripheral proteins of the oxygen-evolving complex and a large number of cofactors. It forms dimeric complexes. Requires Binds multiple chlorophylls. PSII binds additional chlorophylls, carotenoids and specific lipids. as cofactor.

It localises to the plastid. It is found in the chloroplast thylakoid membrane. Its function is as follows. One of the components of the core complex of photosystem II (PSII). It binds chlorophyll and helps catalyze the primary light-induced photochemical processes of PSII. PSII is a light-driven water:plastoquinone oxidoreductase, using light energy to abstract electrons from H(2)O, generating O(2) and a proton gradient subsequently used for ATP formation. This Agrostis stolonifera (Creeping bentgrass) protein is Photosystem II CP47 reaction center protein.